Reading from the N-terminus, the 875-residue chain is Lysine-specific demethylase 7A (875 aa).

The PHD-type zinc-finger motif lies at Pro-5–Ile-56. Positions Phe-197–Arg-353 constitute a JmjC domain. Thr-246 contacts substrate. Fe cation is bound by residues His-249 and Asp-251. Lys-266 is a substrate binding site. His-321 is a Fe cation binding site. Disordered regions lie at residues Glu-442–Leu-506, Ser-629–Cys-710, and Gln-742–Lys-820. The segment covering Ala-448–Ser-462 has biased composition (polar residues). Positions Gln-478–Lys-505 are enriched in basic residues. The segment covering Ser-650–Leu-663 has biased composition (basic and acidic residues). Positions Ser-688 to Ala-697 are enriched in basic residues. Over residues Gln-742–Ser-762 the composition is skewed to low complexity.

This sequence belongs to the JHDM1 histone demethylase family. JHDM1D subfamily. Fe(2+) serves as cofactor. As to expression, predominantly expressed in brain.

It is found in the nucleus. Functionally, histone demethylase required for brain development. Specifically demethylates dimethylated 'Lys-9' and 'Lys-27' (H3K9me2 and H3K27me2, respectively) of histone H3 and monomethylated histone H4 'Lys-20' residue (H4K20Me1), thereby playing a central role in histone code. The sequence is that of Lysine-specific demethylase 7A (kdm7a) from Danio rerio (Zebrafish).